Reading from the N-terminus, the 512-residue chain is mRNA export factor (512 aa).

Residues Met1–Ala242 form a disordered region. Residues Ile5 to Asp17 carry the Nuclear export signal motif. 2 positions are modified to phosphoserine; by host: Ser16 and Ser18. Composition is skewed to acidic residues over residues Ser16–Asp28 and Pro36–Cys55. The tract at residues Val104–Arg112 is interaction with host ALYREF. The Nuclear localization signal motif lies at Thr110–Arg138. Ser113 carries the post-translational modification Phosphoserine; by host. Residues Pro135–Gly149 show a composition bias toward basic residues. A Dimethylated arginine; by host modification is found at Arg138. The interval Arg138–Gly152 is RGG-box. Arg148 carries the post-translational modification Omega-N-methylarginine; by host. Dimethylated arginine; by host is present on Arg150. The span at Ala228–Pro240 shows a compositional bias: basic and acidic residues. Zn(2+)-binding residues include Cys400, His479, Cys483, and Cys488. Residues Cys400–Cys488 form a CHC2-type zinc finger.

This sequence belongs to the HHV-1 ICP27 protein family. Interacts with host RBP1; this interaction facilitates the RNA polymerase recruitment to viral transcription sites. Interacts (via the RGG box) with host ALYREF/THOC4; this interaction recruits ALYREF to viral replication compartments and probably directs viral mRNA to the TAP/NFX1 pathway. Interacts (via the RGG box) with host SRPK1; this interaction relocalizes SRPK1 to the nucleus and seems to alter its activity. Interacts with ICP4; this interaction modulates ICP4 DNA-binding activity. Interacts with host NXF1; this interaction allows efficient export of HSV-1 early and late transcripts. Interacts with host IRF3; this interaction inhibits IRF3 phosphorylation and nuclear translocation. In terms of processing, methylated within the RGG box possibly by host PRMT1. When hypomethylated, ICP27 is exported to the cytoplasm earlier and more rapidly. Phosphorylated.

The protein resides in the host cytoplasm. It is found in the host nucleus. In terms of biological role, multifunctional regulator of the expression of viral genes that contributes to the shutoff of host protein synthesis and mediates nuclear export of viral intronless mRNAs. Also stimulates translation of viral transcripts. Independently, plays a role in the regulation of virion release. Also plays a role in the inhibition of host innate immune response by targeting host IRF3 and thereby preventing production of beta-interferon. Silences the 3' splice site of the host promyelocytic leukemia (PML) intron 7a, thereby switching PML isoforms from PML-II to PML-V. This could be linked to the accelerated mRNA export induced by ICP27 which might not provide sufficient time for PML pre-mRNA to be spliced in the nucleus. Also suppresses splicing of the viral ICP34.5 mRNA, allowing the virus to express a variant form of ICP34.5. The chain is mRNA export factor from Human herpesvirus 2 (strain HG52) (HHV-2).